Reading from the N-terminus, the 358-residue chain is Methylthioribose-1-phosphate isomerase (358 aa).

Residues 54–56 (RGA), Arg-96, and Gln-205 each bind substrate. Asp-246 serves as the catalytic Proton donor. Residue 256–257 (NK) participates in substrate binding.

The protein belongs to the eIF-2B alpha/beta/delta subunits family. MtnA subfamily.

The enzyme catalyses 5-(methylsulfanyl)-alpha-D-ribose 1-phosphate = 5-(methylsulfanyl)-D-ribulose 1-phosphate. Its pathway is amino-acid biosynthesis; L-methionine biosynthesis via salvage pathway; L-methionine from S-methyl-5-thio-alpha-D-ribose 1-phosphate: step 1/6. Functionally, catalyzes the interconversion of methylthioribose-1-phosphate (MTR-1-P) into methylthioribulose-1-phosphate (MTRu-1-P). This chain is Methylthioribose-1-phosphate isomerase, found in Pseudomonas syringae pv. syringae (strain B728a).